The following is a 373-amino-acid chain: GDP-mannose 4,6-dehydratase (373 aa).

Residues 10–15, 65–66, 87–91, and Y102 each bind NADP(+); these read GITGQD, DL, and LGAQS. The active site involves T134. Residues E136 and Y158 each act as nucleophile in the active site. Residues K162, H188, and R193 each coordinate NADP(+).

Belongs to the NAD(P)-dependent epimerase/dehydratase family. GDP-mannose 4,6-dehydratase subfamily. It depends on NADP(+) as a cofactor.

The catalysed reaction is GDP-alpha-D-mannose = GDP-4-dehydro-alpha-D-rhamnose + H2O. Functionally, catalyzes the conversion of GDP-D-mannose to GDP-4-dehydro-6-deoxy-D-mannose. This Vibrio cholerae serotype O1 (strain ATCC 39315 / El Tor Inaba N16961) protein is GDP-mannose 4,6-dehydratase.